The chain runs to 572 residues: Proline--tRNA ligase (572 aa).

This sequence belongs to the class-II aminoacyl-tRNA synthetase family. ProS type 1 subfamily. Homodimer.

Its subcellular location is the cytoplasm. It catalyses the reaction tRNA(Pro) + L-proline + ATP = L-prolyl-tRNA(Pro) + AMP + diphosphate. In terms of biological role, catalyzes the attachment of proline to tRNA(Pro) in a two-step reaction: proline is first activated by ATP to form Pro-AMP and then transferred to the acceptor end of tRNA(Pro). As ProRS can inadvertently accommodate and process non-cognate amino acids such as alanine and cysteine, to avoid such errors it has two additional distinct editing activities against alanine. One activity is designated as 'pretransfer' editing and involves the tRNA(Pro)-independent hydrolysis of activated Ala-AMP. The other activity is designated 'posttransfer' editing and involves deacylation of mischarged Ala-tRNA(Pro). The misacylated Cys-tRNA(Pro) is not edited by ProRS. The sequence is that of Proline--tRNA ligase from Salmonella dublin (strain CT_02021853).